A 243-amino-acid chain; its full sequence is Tyrosine recombinase XerD-like (243 aa).

In terms of domain architecture, Core-binding (CB) spans 1 to 72; the sequence is MKQAIESFIQ…AVNQFLYFLY (72 aa). The region spanning 91-243 is the Tyr recombinase domain; it reads SVKKKLERED…KTSMSLEKFR (153 aa). Residues lysine 149 and arginine 210 contribute to the active site.

This sequence belongs to the 'phage' integrase family. XerD-like subfamily.

It is found in the cytoplasm. In terms of biological role, putative tyrosine recombinase. Not involved in the cutting and rejoining of the recombining DNA molecules on dif(SL) site. This Streptococcus suis (strain 98HAH33) protein is Tyrosine recombinase XerD-like.